The sequence spans 488 residues: Protein nucleotidyltransferase YdiU (488 aa).

Glycine 91, glycine 93, arginine 94, lysine 114, aspartate 126, glycine 127, arginine 177, and arginine 184 together coordinate ATP. Aspartate 253 serves as the catalytic Proton acceptor. Positions 254 and 263 each coordinate Mg(2+). Aspartate 263 contacts ATP.

Belongs to the SELO family. Requires Mg(2+) as cofactor. It depends on Mn(2+) as a cofactor.

It catalyses the reaction L-seryl-[protein] + ATP = 3-O-(5'-adenylyl)-L-seryl-[protein] + diphosphate. The catalysed reaction is L-threonyl-[protein] + ATP = 3-O-(5'-adenylyl)-L-threonyl-[protein] + diphosphate. It carries out the reaction L-tyrosyl-[protein] + ATP = O-(5'-adenylyl)-L-tyrosyl-[protein] + diphosphate. The enzyme catalyses L-histidyl-[protein] + UTP = N(tele)-(5'-uridylyl)-L-histidyl-[protein] + diphosphate. It catalyses the reaction L-seryl-[protein] + UTP = O-(5'-uridylyl)-L-seryl-[protein] + diphosphate. The catalysed reaction is L-tyrosyl-[protein] + UTP = O-(5'-uridylyl)-L-tyrosyl-[protein] + diphosphate. Its function is as follows. Nucleotidyltransferase involved in the post-translational modification of proteins. It can catalyze the addition of adenosine monophosphate (AMP) or uridine monophosphate (UMP) to a protein, resulting in modifications known as AMPylation and UMPylation. In Bacillus cereus (strain B4264), this protein is Protein nucleotidyltransferase YdiU.